The chain runs to 388 residues: Ferrochelatase (388 aa).

His-196 and Glu-277 together coordinate Fe cation.

The protein belongs to the ferrochelatase family.

The protein localises to the cytoplasm. The catalysed reaction is heme b + 2 H(+) = protoporphyrin IX + Fe(2+). The protein operates within porphyrin-containing compound metabolism; protoheme biosynthesis; protoheme from protoporphyrin-IX: step 1/1. In terms of biological role, catalyzes the ferrous insertion into protoporphyrin IX. This chain is Ferrochelatase, found in Nostoc sp. (strain PCC 7120 / SAG 25.82 / UTEX 2576).